A 232-amino-acid polypeptide reads, in one-letter code: tRNA (guanine-N(1)-)-methyltransferase (232 aa).

S-adenosyl-L-methionine-binding positions include Gly111 and 131-136 (IGDYIL).

It belongs to the RNA methyltransferase TrmD family. As to quaternary structure, homodimer.

The protein resides in the cytoplasm. It carries out the reaction guanosine(37) in tRNA + S-adenosyl-L-methionine = N(1)-methylguanosine(37) in tRNA + S-adenosyl-L-homocysteine + H(+). In terms of biological role, specifically methylates guanosine-37 in various tRNAs. This is tRNA (guanine-N(1)-)-methyltransferase from Bartonella tribocorum (strain CIP 105476 / IBS 506).